Reading from the N-terminus, the 242-residue chain is Ditrans,polycis-undecaprenyl-diphosphate synthase ((2E,6E)-farnesyl-diphosphate specific) (242 aa).

The active site involves aspartate 21. Aspartate 21 is a Mg(2+) binding site. Residues 22 to 25 (GNGR), tryptophan 26, arginine 34, histidine 38, and 66 to 68 (SSE) contribute to the substrate site. The active-site Proton acceptor is asparagine 69. Substrate-binding positions include tryptophan 70, arginine 72, arginine 189, and 195 to 197 (RIS). Glutamate 208 is a Mg(2+) binding site.

It belongs to the UPP synthase family. Homodimer. Mg(2+) is required as a cofactor.

It catalyses the reaction 8 isopentenyl diphosphate + (2E,6E)-farnesyl diphosphate = di-trans,octa-cis-undecaprenyl diphosphate + 8 diphosphate. In terms of biological role, catalyzes the sequential condensation of isopentenyl diphosphate (IPP) with (2E,6E)-farnesyl diphosphate (E,E-FPP) to yield (2Z,6Z,10Z,14Z,18Z,22Z,26Z,30Z,34E,38E)-undecaprenyl diphosphate (di-trans,octa-cis-UPP). UPP is the precursor of glycosyl carrier lipid in the biosynthesis of bacterial cell wall polysaccharide components such as peptidoglycan and lipopolysaccharide. The chain is Ditrans,polycis-undecaprenyl-diphosphate synthase ((2E,6E)-farnesyl-diphosphate specific) from Haemophilus ducreyi (strain 35000HP / ATCC 700724).